The following is an 824-amino-acid chain: Acyl-homoserine lactone acylase QuiP (824 aa).

An N-terminal signal peptide occupies residues 1 to 26 (MASPALRHFLPRFGAAAAAASFLSLA). S264 serves as the catalytic Nucleophile.

This sequence belongs to the peptidase S45 family. As to quaternary structure, heterodimer of an alpha subunit and a beta subunit processed from the same precursor.

It is found in the periplasm. The enzyme catalyses an N-acyl-L-homoserine lactone + H2O = L-homoserine lactone + a carboxylate. Its function is as follows. Catalyzes the deacylation of acyl-homoserine lactone (AHL or acyl-HSL), releasing homoserine lactone (HSL) and the corresponding fatty acid. Possesses a specificity for the degradation of long-chain acyl-HSLs (side chains of seven or more carbons in length). The sequence is that of Acyl-homoserine lactone acylase QuiP (quiP) from Pseudomonas syringae pv. syringae (strain B728a).